A 357-amino-acid polypeptide reads, in one-letter code: GTPase Obg (357 aa).

An Obg domain is found at 1-159 (MKFVDEAEIQ…RTLKLELKLL (159 aa)). One can recognise an OBG-type G domain in the interval 160-343 (ADIGMLGFPN…IMKSAMTLFE (184 aa)). Residues 166–173 (GFPNVGKS), 191–195 (FTTLY), 213–216 (DVPG), 293–296 (NKAD), and 324–326 (SAV) contribute to the GTP site. Residues Ser173 and Thr193 each contribute to the Mg(2+) site.

The protein belongs to the TRAFAC class OBG-HflX-like GTPase superfamily. OBG GTPase family. As to quaternary structure, monomer. Mg(2+) is required as a cofactor.

Its subcellular location is the cytoplasm. An essential GTPase which binds GTP, GDP and possibly (p)ppGpp with moderate affinity, with high nucleotide exchange rates and a fairly low GTP hydrolysis rate. Plays a role in control of the cell cycle, stress response, ribosome biogenesis and in those bacteria that undergo differentiation, in morphogenesis control. The sequence is that of GTPase Obg from Xylella fastidiosa (strain M23).